Here is a 95-residue protein sequence, read N- to C-terminus: Large ribosomal subunit protein uL23 (95 aa).

Belongs to the universal ribosomal protein uL23 family. Part of the 50S ribosomal subunit. Contacts protein L29, and trigger factor when it is bound to the ribosome.

Functionally, one of the early assembly proteins it binds 23S rRNA. One of the proteins that surrounds the polypeptide exit tunnel on the outside of the ribosome. Forms the main docking site for trigger factor binding to the ribosome. The polypeptide is Large ribosomal subunit protein uL23 (Desulfatibacillum aliphaticivorans).